We begin with the raw amino-acid sequence, 927 residues long: Sodium/calcium exchanger 3 (927 aa).

The N-terminal stretch at Met-1–Ala-30 is a signal peptide. Residues Glu-31–Lys-73 are Extracellular-facing. The N-linked (GlcNAc...) asparagine glycan is linked to Asn-45. A helical transmembrane segment spans residues Ile-74 to Ile-94. The Cytoplasmic portion of the chain corresponds to Ala-95 to Glu-147. The stretch at Ala-140–Ile-180 is one Alpha-1 repeat. The chain crosses the membrane as a helical span at residues Ile-148–Ser-168. A topological domain (extracellular) is located at residue Thr-169. Residues Ile-170 to Pro-190 traverse the membrane as a helical segment. The Cytoplasmic portion of the chain corresponds to Asp-191–Val-202. A helical transmembrane segment spans residues Phe-203–Val-223. Over Phe-224–Gln-230 the chain is Extracellular. A helical transmembrane segment spans residues Val-231–Ala-251. Residues Asp-252–Ser-726 lie on the Cytoplasmic side of the membrane. The segment at Lys-253–Gly-272 is putative calmodulin-binding region. 2 consecutive Calx-beta domains span residues Val-386–Ser-485 and Ala-519–Gly-619. Ca(2+) is bound by residues Glu-409, Asp-445, Asp-470, Asp-471, Ile-473, Glu-475, Glu-478, Asp-525, Asp-526, Asp-527, Glu-543, Asp-579, Glu-606, Glu-607, and Glu-672. A helical transmembrane segment spans residues Cys-727–Pro-747. Residues Pro-748–Gly-754 are Extracellular-facing. Residues Trp-755–Leu-775 traverse the membrane as a helical segment. The Cytoplasmic segment spans residues Ala-776–His-778. A helical transmembrane segment spans residues Phe-779–Thr-799. Residues Ala-796–Val-832 form an Alpha-2 repeat. Over Ser-800–Asn-828 the chain is Extracellular. The N-linked (GlcNAc...) asparagine glycan is linked to Asn-823. A helical transmembrane segment spans residues Ala-829–Leu-849. Residues Gln-850–Thr-860 lie on the Cytoplasmic side of the membrane. Residues Leu-861–Tyr-881 traverse the membrane as a helical segment. Residues Arg-882 to Trp-903 are Extracellular-facing. The helical transmembrane segment at Leu-904–Ile-924 threads the bilayer. Topologically, residues Lys-925–Phe-927 are cytoplasmic.

It belongs to the Ca(2+):cation antiporter (CaCA) (TC 2.A.19) family. SLC8 subfamily. As to quaternary structure, interacts with AKAP1. As to expression, isoform 2 is expressed in brain and skeletal muscle. Isoform 3 is expressed in excitable cells of brain, retina and skeletal muscle. Isoform 4 is expressed in skeletal muscle.

It is found in the cell membrane. Its subcellular location is the perikaryon. The protein resides in the cell projection. It localises to the dendrite. The protein localises to the dendritic spine. It is found in the sarcolemma. Its subcellular location is the cytoplasm. The protein resides in the sarcoplasm. It localises to the cell junction. The protein localises to the mitochondrion outer membrane. It is found in the perinuclear region. Its subcellular location is the endoplasmic reticulum membrane. It catalyses the reaction Ca(2+)(in) + 3 Na(+)(out) = Ca(2+)(out) + 3 Na(+)(in). Calcium transport is down-regulated by Na(+) and stimulated by Ca(2+). In terms of biological role, mediates the electrogenic exchange of Ca(2+) against Na(+) ions across the cell membrane, and thereby contributes to the regulation of cytoplasmic Ca(2+) levels and Ca(2+)-dependent cellular processes. Contributes to cellular Ca(2+) homeostasis in excitable cells, both in muscle and in brain. In a first phase, voltage-gated channels mediate the rapid increase of cytoplasmic Ca(2+) levels due to release of Ca(2+) stores from the endoplasmic reticulum. SLC8A3 mediates the export of Ca(2+) from the cell during the next phase, so that cytoplasmic Ca(2+) levels rapidly return to baseline. Contributes to Ca(2+) transport during excitation-contraction coupling in muscle. In neurons, contributes to the rapid decrease of cytoplasmic Ca(2+) levels back to baseline after neuronal activation, and thereby contributes to modulate synaptic plasticity, learning and memory. Required for normal oligodendrocyte differentiation and for normal myelination. Mediates Ca(2+) efflux from mitochondria and contributes to mitochondrial Ca(2+) ion homeostasis. The chain is Sodium/calcium exchanger 3 (SLC8A3) from Homo sapiens (Human).